Here is an 828-residue protein sequence, read N- to C-terminus: DNA gyrase subunit A (828 aa).

The 466-residue stretch at 32 to 497 folds into the Topo IIA-type catalytic domain; the sequence is LPDVRDGLKP…EVLSLEDEDL (466 aa). Residue tyrosine 120 is the O-(5'-phospho-DNA)-tyrosine intermediate of the active site. Positions 524–530 match the GyrA-box motif; sequence QKRGGRG.

The protein belongs to the type II topoisomerase GyrA/ParC subunit family. As to quaternary structure, heterotetramer, composed of two GyrA and two GyrB chains. In the heterotetramer, GyrA contains the active site tyrosine that forms a transient covalent intermediate with DNA, while GyrB binds cofactors and catalyzes ATP hydrolysis.

The protein resides in the cytoplasm. It catalyses the reaction ATP-dependent breakage, passage and rejoining of double-stranded DNA.. In terms of biological role, a type II topoisomerase that negatively supercoils closed circular double-stranded (ds) DNA in an ATP-dependent manner to modulate DNA topology and maintain chromosomes in an underwound state. Negative supercoiling favors strand separation, and DNA replication, transcription, recombination and repair, all of which involve strand separation. Also able to catalyze the interconversion of other topological isomers of dsDNA rings, including catenanes and knotted rings. Type II topoisomerases break and join 2 DNA strands simultaneously in an ATP-dependent manner. This Streptococcus pyogenes serotype M6 (strain ATCC BAA-946 / MGAS10394) protein is DNA gyrase subunit A.